Reading from the N-terminus, the 284-residue chain is 2-dehydro-3-deoxyphosphooctonate aldolase (284 aa).

It belongs to the KdsA family.

It localises to the cytoplasm. The catalysed reaction is D-arabinose 5-phosphate + phosphoenolpyruvate + H2O = 3-deoxy-alpha-D-manno-2-octulosonate-8-phosphate + phosphate. It functions in the pathway carbohydrate biosynthesis; 3-deoxy-D-manno-octulosonate biosynthesis; 3-deoxy-D-manno-octulosonate from D-ribulose 5-phosphate: step 2/3. The protein operates within bacterial outer membrane biogenesis; lipopolysaccharide biosynthesis. In Haemophilus influenzae (strain PittEE), this protein is 2-dehydro-3-deoxyphosphooctonate aldolase.